The sequence spans 76 residues: MSTEKLEASEEPQAPLANTSETNSIKGDTENIVTVFDLANEIEKSLKDVQRQMKENDDEFSRSIQAIEDKLNKMSR.

Residues 1–28 form a disordered region; it reads MSTEKLEASEEPQAPLANTSETNSIKGD. The segment covering 16 to 26 has biased composition (polar residues); the sequence is LANTSETNSIK.

It is found in the cytoplasm. Its subcellular location is the bud. The protein resides in the bud neck. This is an uncharacterized protein from Saccharomyces cerevisiae (strain ATCC 204508 / S288c) (Baker's yeast).